We begin with the raw amino-acid sequence, 890 residues long: Receptor like protein 23 (890 aa).

The signal sequence occupies residues 1–22 (MSKALLHLHFLSLFLLCCVCHS). The Extracellular segment spans residues 23–850 (SIFTLNFHFT…EEEEEVLNGR (828 aa)). N58, N70, N91, N109, and N145 each carry an N-linked (GlcNAc...) asparagine glycan. LRR repeat units lie at residues 97–121 (FHQL…GFGN), 123–145 (KRLE…SFSN), 146–171 (LTML…GLRK), 173–195 (IVLD…LFEL), 196–218 (HQLR…KFGN), 220–243 (HRLE…ISNL), 244–268 (TRLT…NLTN), 270–290 (YELD…LLTL), 291–316 (PFLA…STSS), 318–339 (LEIM…ISKL), 340–363 (INLK…LFSS), 364–389 (LKSL…SYIP), 391–411 (TLEM…ILKT), 412–436 (LKEL…LWSL), 438–461 (LLQS…ILVN), 462–485 (SSVL…PLSI), 487–506 (GFGV…ICNR), 507–527 (SSLA…PPCL), 528–551 (RNLE…LCDG), 553–575 (SLRT…FVNC), 577–598 (SLKF…WLKA), 599–623 (LPNL…HQGP), 626–650 (FPEL…YFVN), 699–724 (LTSY…GLLK), 726–747 (LIAV…MANL), 748–771 (ENLE…LGSI), and 773–796 (FLAY…QITG). 4 N-linked (GlcNAc...) asparagine glycosylation sites follow: N189, N207, N242, and N265. A glycan (N-linked (GlcNAc...) asparagine) is linked at N311. An N-linked (GlcNAc...) asparagine glycan is attached at N351. N-linked (GlcNAc...) asparagine glycosylation occurs at N461. Residues N505 and N518 are each glycosylated (N-linked (GlcNAc...) asparagine). A glycan (N-linked (GlcNAc...) asparagine) is linked at N574. N-linked (GlcNAc...) asparagine glycosylation occurs at N730. The N-linked (GlcNAc...) asparagine glycan is linked to N778. The helical transmembrane segment at 851-871 (AVAIGYGSGLLLGLAIAQVIA) threads the bilayer. The Cytoplasmic portion of the chain corresponds to 872 to 890 (SYKPEWLVKIIGLNKRRKR).

Belongs to the RLP family. Directly interacts with a 20-mer fragment (nlp20) from NLPs through its extracellular LRR domain. Component of a trimeric complex composed of RLP23, SOBIR1 and BAK1. BAK1 is recruited into a pre-formed RLP23-SOBIR1 complex in a ligand-dependent manner. Interacts with SOBIR1.

The protein resides in the cell membrane. Its function is as follows. Involved in the perception of necrosis and ethylene-inducing peptide 1-like proteins (NLPs), that act as extracellular signals mediating immune activation. Component of the RLP23-SOBIR1-BAK1 complex that mediates NLP-triggered immunity. The polypeptide is Receptor like protein 23 (Arabidopsis thaliana (Mouse-ear cress)).